The primary structure comprises 127 residues: Small ribosomal subunit protein uS11 (127 aa).

This sequence belongs to the universal ribosomal protein uS11 family. As to quaternary structure, part of the 30S ribosomal subunit. Interacts with proteins S7 and S18. Binds to IF-3.

In terms of biological role, located on the platform of the 30S subunit, it bridges several disparate RNA helices of the 16S rRNA. Forms part of the Shine-Dalgarno cleft in the 70S ribosome. In Chlorobaculum tepidum (strain ATCC 49652 / DSM 12025 / NBRC 103806 / TLS) (Chlorobium tepidum), this protein is Small ribosomal subunit protein uS11.